The primary structure comprises 226 residues: Ribose-5-phosphate isomerase A (226 aa).

Residues 33 to 36 (TGST), 86 to 89 (DGAD), and 99 to 102 (KGGG) each bind substrate. The Proton acceptor role is filled by Glu-108. Residue Lys-126 participates in substrate binding.

Belongs to the ribose 5-phosphate isomerase family. As to quaternary structure, homodimer.

The enzyme catalyses aldehydo-D-ribose 5-phosphate = D-ribulose 5-phosphate. The protein operates within carbohydrate degradation; pentose phosphate pathway; D-ribose 5-phosphate from D-ribulose 5-phosphate (non-oxidative stage): step 1/1. Catalyzes the reversible conversion of ribose-5-phosphate to ribulose 5-phosphate. This Bordetella bronchiseptica (strain ATCC BAA-588 / NCTC 13252 / RB50) (Alcaligenes bronchisepticus) protein is Ribose-5-phosphate isomerase A.